The sequence spans 104 residues: Type VII secretion system extracellular protein B (104 aa).

This sequence belongs to the WXG100 family. As to quaternary structure, homodimer. When mixed with EsxA does not form heterodimers.

It localises to the secreted. In terms of biological role, virulence factor that is important for the establishment of infection in the host. EsxB is required for EsxA synthesis as well as secretion. Mediates together with EsxA the release of S.aureus from the host cell. Also inhibits host cytokine production and thus modulates dendritic cell-mediated immunity. This is Type VII secretion system extracellular protein B from Staphylococcus aureus (strain MSSA476).